We begin with the raw amino-acid sequence, 58 residues long: Large ribosomal subunit protein uL30 (58 aa).

The protein belongs to the universal ribosomal protein uL30 family. Part of the 50S ribosomal subunit.

The sequence is that of Large ribosomal subunit protein uL30 from Erythrobacter litoralis (strain HTCC2594).